Consider the following 488-residue polypeptide: Probable aldehyde dehydrogenase (488 aa).

240–245 serves as a coordination point for NAD(+); that stretch reads GSSVTG. Residues E262 and C296 contribute to the active site.

The protein belongs to the aldehyde dehydrogenase family.

The enzyme catalyses an aldehyde + NAD(+) + H2O = a carboxylate + NADH + 2 H(+). Involved in an alpha-terpineol oxidation system. The sequence is that of Probable aldehyde dehydrogenase (terPE) from Pseudomonas sp.